A 512-amino-acid chain; its full sequence is Allene oxide synthase 1, chloroplastic (512 aa).

A chloroplast-targeting transit peptide spans 1 to 25 (MATAAACISFASPSPARVVIRRQTR). The disordered stretch occupies residues 23–43 (QTRASASASATDRQEVVSPKR). The heme b site is built by Lys127, His158, and Lys162. Asn315 lines the (13S)-hydroperoxy-(9Z,11E,15Z)-octadecatrienoate pocket. 2 residues coordinate heme b: Lys463 and Cys465.

This sequence belongs to the cytochrome P450 family. Heme b is required as a cofactor. As to expression, expressed in coleoptiles, and at lower level in leaves of dark-grown seedlings.

The protein resides in the plastid. It is found in the chloroplast membrane. The catalysed reaction is (13S)-hydroperoxy-(9Z,11E,15Z)-octadecatrienoate = (9Z,13S,15Z)-12,13-epoxyoctadeca-9,11,15-trienoate + H2O. Its pathway is lipid metabolism; oxylipin biosynthesis. Involved in the biosynthesis of jasmonic acid, a growth regulator that is implicated also as a signaling molecule in plant defense. Converts 13-hydroperoxylinolenic acid to 12,13-epoxylinolenic acid. This chain is Allene oxide synthase 1, chloroplastic (CYP74A1), found in Oryza sativa subsp. japonica (Rice).